The sequence spans 353 residues: Photosystem II D2 protein (353 aa).

Residue T2 is modified to N-acetylthreonine. Position 2 is a phosphothreonine (T2). Residues 41-61 (CAYFALGGWFTGTTFVTSWYT) traverse the membrane as a helical segment. H118 provides a ligand contact to chlorophyll a. Residues 125–141 (GFMLRQFELARSVQLRP) form a helical membrane-spanning segment. Residues Q130 and N143 each contribute to the pheophytin a site. A helical membrane pass occupies residues 153 to 166 (VFVSVFLIYPLGQS). H198 contacts chlorophyll a. Residues 208–228 (AALLCAIHGATVENTLFEDGD) form a helical membrane-spanning segment. The a plastoquinone site is built by H215 and F262. H215 is a binding site for Fe cation. Fe cation is bound at residue H269. A helical transmembrane segment spans residues 279 to 295 (GLWMSALGVVGLALNLR).

The protein belongs to the reaction center PufL/M/PsbA/D family. As to quaternary structure, PSII is composed of 1 copy each of membrane proteins PsbA, PsbB, PsbC, PsbD, PsbE, PsbF, PsbH, PsbI, PsbJ, PsbK, PsbL, PsbM, PsbT, PsbX, PsbY, PsbZ, Psb30/Ycf12, at least 3 peripheral proteins of the oxygen-evolving complex and a large number of cofactors. It forms dimeric complexes. It depends on The D1/D2 heterodimer binds P680, chlorophylls that are the primary electron donor of PSII, and subsequent electron acceptors. It shares a non-heme iron and each subunit binds pheophytin, quinone, additional chlorophylls, carotenoids and lipids. There is also a Cl(-1) ion associated with D1 and D2, which is required for oxygen evolution. The PSII complex binds additional chlorophylls, carotenoids and specific lipids. as a cofactor.

The protein localises to the plastid. It is found in the chloroplast thylakoid membrane. It catalyses the reaction 2 a plastoquinone + 4 hnu + 2 H2O = 2 a plastoquinol + O2. Photosystem II (PSII) is a light-driven water:plastoquinone oxidoreductase that uses light energy to abstract electrons from H(2)O, generating O(2) and a proton gradient subsequently used for ATP formation. It consists of a core antenna complex that captures photons, and an electron transfer chain that converts photonic excitation into a charge separation. The D1/D2 (PsbA/PsbD) reaction center heterodimer binds P680, the primary electron donor of PSII as well as several subsequent electron acceptors. D2 is needed for assembly of a stable PSII complex. The protein is Photosystem II D2 protein of Nandina domestica (Heavenly bamboo).